Here is a 152-residue protein sequence, read N- to C-terminus: MFRGATLVNLDSKGRITVPSRYRTTLNEASEGQMVCTIDLNQPCLLLYTLPEWEKIELKLAALSSMNPAERRVQRLLLGHASECQMDSAGRLLLASTLRQHAGLTKEVMLVGQFNKFELWDEQVWYQQIKEDILAEQTSQEPLSTRLLDLSL.

SpoVT-AbrB domains lie at 5 to 52 and 81 to 124; these read ATLV…TLPE and ASEC…DEQV.

It belongs to the MraZ family. Forms oligomers.

It is found in the cytoplasm. The protein localises to the nucleoid. Negatively regulates its own expression and that of the subsequent genes in the proximal part of the division and cell wall (dcw) gene cluster. Acts by binding directly to DNA. May also regulate the expression of genes outside the dcw cluster. The polypeptide is Transcriptional regulator MraZ (Proteus mirabilis (strain HI4320)).